A 407-amino-acid polypeptide reads, in one-letter code: Argininosuccinate synthase (407 aa).

Residues 10 to 18 (AYSGGLDTS) and Ala-37 each bind ATP. Positions 90 and 95 each coordinate L-citrulline. An ATP-binding site is contributed by Gly-120. 3 residues coordinate L-aspartate: Thr-122, Asn-126, and Asp-127. Asn-126 contributes to the L-citrulline binding site. Residues Arg-130, Ser-181, Ser-190, Glu-266, and Tyr-278 each coordinate L-citrulline.

The protein belongs to the argininosuccinate synthase family. Type 1 subfamily. In terms of assembly, homotetramer.

It is found in the cytoplasm. The catalysed reaction is L-citrulline + L-aspartate + ATP = 2-(N(omega)-L-arginino)succinate + AMP + diphosphate + H(+). It participates in amino-acid biosynthesis; L-arginine biosynthesis; L-arginine from L-ornithine and carbamoyl phosphate: step 2/3. The protein is Argininosuccinate synthase of Ruegeria sp. (strain TM1040) (Silicibacter sp.).